Reading from the N-terminus, the 365-residue chain is 3-dehydroquinate synthase (365 aa).

Residues Asp-69–Lys-74, Gly-103–Asp-107, Thr-127–Thr-128, Lys-140, and Lys-149 contribute to the NAD(+) site. Residues Glu-182, His-245, and His-262 each coordinate Zn(2+).

This sequence belongs to the sugar phosphate cyclases superfamily. Dehydroquinate synthase family. Co(2+) is required as a cofactor. It depends on Zn(2+) as a cofactor. Requires NAD(+) as cofactor.

Its subcellular location is the cytoplasm. The catalysed reaction is 7-phospho-2-dehydro-3-deoxy-D-arabino-heptonate = 3-dehydroquinate + phosphate. It functions in the pathway metabolic intermediate biosynthesis; chorismate biosynthesis; chorismate from D-erythrose 4-phosphate and phosphoenolpyruvate: step 2/7. Its function is as follows. Catalyzes the conversion of 3-deoxy-D-arabino-heptulosonate 7-phosphate (DAHP) to dehydroquinate (DHQ). This chain is 3-dehydroquinate synthase, found in Pseudomonas entomophila (strain L48).